The primary structure comprises 706 residues: Probable tape measure protein (706 aa).

Residues 9–113 (QAELETKGVL…TRLSTELAKV (105 aa)) adopt a coiled-coil conformation. 3 consecutive EF-hand domains span residues 271-290 (GSGTLHAQDFNQMMQSALGA), 361-380 (KDGQLSVQDFTNVFGDGFTS), and 496-521 (KIIDKNKDGKVSNEEMEGAVNDAKDA). Ca(2+) is bound by residues Asp499, Asn501, Asp503, Lys505, and Glu510.

This sequence belongs to the Mulikevirus tape measure protein family.

Serves as a base for tail tube protein polymerization and acts as a template for tail length determination. The sequence is that of Probable tape measure protein from Lactococcus phage c2.